Here is a 276-residue protein sequence, read N- to C-terminus: MGGQKEMADSVKTKLTGKLKAKKVTAPQAKAFSVHLLTASGSFLAFLSVVAASDGRYTAMWWWLGLALFVDGIDGPIARKLEVKYVLPNWSGELLDSIIDYVTYVLIPAFALYQSGFMGTNLSFISGAIIVVSSAIYYADTGMKTKENFFKGFPVVWNMVVFTLFIVRPGEWVAFGTVVASAILSFLPINFLHPVRVVRLRPLNLTIFLLWCAFGVIALYYMLDAPLWVRIGISVTGLYIYFIGAIMQLFPSLGREAALAKARKLVEKQQKSGEAP.

Residues 1–30 (MGGQKEMADSVKTKLTGKLKAKKVTAPQAK) are Cytoplasmic-facing. A helical membrane pass occupies residues 31–51 (AFSVHLLTASGSFLAFLSVVA). Residues 52–57 (ASDGRY) are Periplasmic-facing. Residues 58 to 78 (TAMWWWLGLALFVDGIDGPIA) traverse the membrane as a helical segment. Residues 79 to 91 (RKLEVKYVLPNWS) are Cytoplasmic-facing. Residues 92–112 (GELLDSIIDYVTYVLIPAFAL) form a helical membrane-spanning segment. The Periplasmic portion of the chain corresponds to 113–115 (YQS). A helical transmembrane segment spans residues 116–136 (GFMGTNLSFISGAIIVVSSAI). Over 137–146 (YYADTGMKTK) the chain is Cytoplasmic. Residues 147 to 167 (ENFFKGFPVVWNMVVFTLFIV) traverse the membrane as a helical segment. The Periplasmic segment spans residues 168–171 (RPGE). Residues 172-192 (WVAFGTVVASAILSFLPINFL) traverse the membrane as a helical segment. Topologically, residues 193 to 202 (HPVRVVRLRP) are cytoplasmic. The helical transmembrane segment at 203 to 223 (LNLTIFLLWCAFGVIALYYML) threads the bilayer. Over 224–230 (DAPLWVR) the chain is Periplasmic. Residues 231–251 (IGISVTGLYIYFIGAIMQLFP) traverse the membrane as a helical segment. The Cytoplasmic segment spans residues 252–276 (SLGREAALAKARKLVEKQQKSGEAP).

Belongs to the CDP-alcohol phosphatidyltransferase class-I family. It depends on Mn(2+) as a cofactor.

It localises to the cell inner membrane. The enzyme catalyses a CDP-1,2-diacyl-sn-glycerol + choline = a 1,2-diacyl-sn-glycero-3-phosphocholine + CMP + H(+). Its function is as follows. Condenses choline with CDP-diglyceride to produce phosphatidylcholine and CMP. This Brucella melitensis biotype 1 (strain ATCC 23456 / CCUG 17765 / NCTC 10094 / 16M) protein is Phosphatidylcholine synthase.